A 360-amino-acid chain; its full sequence is MTATLERNASVSLWEQFCGFITSTENRLYIGWFGVLMFPLLLTATTLFIIAFVAAPPVDIDGIREPVAGSLFYGNNIISGAVIPSSAAIGMHFYPIWEAASLDEWLYNGGPYQFVVMHFLLGVACYMGREWELSFRLGMRPWIAVAYSAPVAAATAVFLIYPIGQGSFSDGMPLGISGTFNFMLVFQAEHNILMHPFHMMGVAGVFGGSLFSAMHGSLVTSSLIRETTENESANAGYKFGQEEETYNIVAAHGYFGRLIFQYASFNNSRSLHFFLALWPVVGIWFTALGLSTMAFNLNGLNFNQSVVDSQGRVISTWADIINRANLGMEVMHERNAHNFPLDLASGEVMPVALTAPSINA.

The next 3 helical transmembrane spans lie at 29 to 46 (YIGW…TATT), 118 to 133 (HFLL…EWEL), and 142 to 156 (WIAV…AATA). Chlorophyll a is bound at residue H118. Y126 serves as a coordination point for pheophytin a. Residues D170 and E189 each contribute to the [CaMn4O5] cluster site. A helical transmembrane segment spans residues 197 to 218 (FHMMGVAGVFGGSLFSAMHGSL). H198 serves as a coordination point for chlorophyll a. A quinone contacts are provided by residues H215 and 264–265 (SF). H215 provides a ligand contact to Fe cation. H272 lines the Fe cation pocket. Residues 274–288 (FLALWPVVGIWFTAL) traverse the membrane as a helical segment. Residues H332, E333, D342, and A344 each contribute to the [CaMn4O5] cluster site. A propeptide spanning residues 345–360 (SGEVMPVALTAPSINA) is cleaved from the precursor.

It belongs to the reaction center PufL/M/PsbA/D family. As to quaternary structure, PSII is composed of 1 copy each of membrane proteins PsbA, PsbB, PsbC, PsbD, PsbE, PsbF, PsbH, PsbI, PsbJ, PsbK, PsbL, PsbM, PsbT, PsbX, PsbY, PsbZ, Psb30/Ycf12, at least 3 peripheral proteins of the oxygen-evolving complex and a large number of cofactors. It forms dimeric complexes. The D1/D2 heterodimer binds P680, chlorophylls that are the primary electron donor of PSII, and subsequent electron acceptors. It shares a non-heme iron and each subunit binds pheophytin, quinone, additional chlorophylls, carotenoids and lipids. D1 provides most of the ligands for the Mn4-Ca-O5 cluster of the oxygen-evolving complex (OEC). There is also a Cl(-1) ion associated with D1 and D2, which is required for oxygen evolution. The PSII complex binds additional chlorophylls, carotenoids and specific lipids. serves as cofactor. Tyr-161 forms a radical intermediate that is referred to as redox-active TyrZ, YZ or Y-Z. In terms of processing, C-terminally processed by CTPA; processing is essential to allow assembly of the oxygen-evolving complex and thus photosynthetic growth.

The protein localises to the plastid. The protein resides in the cyanelle thylakoid membrane. It carries out the reaction 2 a plastoquinone + 4 hnu + 2 H2O = 2 a plastoquinol + O2. Functionally, photosystem II (PSII) is a light-driven water:plastoquinone oxidoreductase that uses light energy to abstract electrons from H(2)O, generating O(2) and a proton gradient subsequently used for ATP formation. It consists of a core antenna complex that captures photons, and an electron transfer chain that converts photonic excitation into a charge separation. The D1/D2 (PsbA/PsbD) reaction center heterodimer binds P680, the primary electron donor of PSII as well as several subsequent electron acceptors. This is Photosystem II protein D1 from Cyanophora paradoxa.